The chain runs to 125 residues: Small ribosomal subunit protein uS12m (125 aa).

2 disordered regions span residues 1-23 (MPTL…RTRA) and 104-125 (LMGI…PKSI). A compositionally biased stretch (basic and acidic residues) spans 10–23 (HGREEKRRTDRTRA).

The protein belongs to the universal ribosomal protein uS12 family.

It is found in the mitochondrion. In terms of biological role, protein S12 is involved in the translation initiation step. This is Small ribosomal subunit protein uS12m (RPS12) from Raphanus sativus (Radish).